A 180-amino-acid chain; its full sequence is Small ribosomal subunit protein bS18 (180 aa).

Disordered stretches follow at residues 1–26 and 53–82; these read MKNK…AHKV and YSDK…DKES.

It belongs to the bacterial ribosomal protein bS18 family. In terms of assembly, part of the 30S ribosomal subunit. Forms a tight heterodimer with protein bS6.

Binds as a heterodimer with protein bS6 to the central domain of the 16S rRNA, where it helps stabilize the platform of the 30S subunit. This chain is Small ribosomal subunit protein bS18, found in Karelsulcia muelleri (strain GWSS) (Sulcia muelleri).